The sequence spans 613 residues: Portal protein (613 aa).

The tract at residues 577–613 (ATGGDHGIRQAPSARGDTEPDHAKSKPARDPPPGAGS) is disordered. Residues 592-605 (GDTEPDHAKSKPAR) are compositionally biased toward basic and acidic residues.

It belongs to the herpesviridae portal protein family. Homododecamerizes. Interacts with terminase subunits TRM1 and TRM3.

It is found in the virion. Its subcellular location is the host nucleus. The protein localises to the host cytoplasm. Its function is as follows. Forms a portal in the viral capsid through which viral DNA is translocated during DNA packaging. Assembles as a dodecamer at a single fivefold axe of the T=16 icosahedric capsid. Binds to the molecular motor that translocates the viral DNA, termed terminase. The protein is Portal protein of Epstein-Barr virus (strain B95-8) (HHV-4).